We begin with the raw amino-acid sequence, 173 residues long: T cell receptor gamma constant 1 (173 aa).

Residues Pro10 to Ile104 enclose the Ig-like domain. Cysteines 32 and 88 form a disulfide. N-linked (GlcNAc...) asparagine glycosylation is found at Asn66, Asn120, Asn126, and Asn135. Residues Tyr139–Leu161 form a helical membrane-spanning segment.

In terms of assembly, gamma-delta TR is a heterodimer composed of a gamma and delta chain; disulfide-linked. The gamma-delta TR is associated with the transmembrane signaling CD3 coreceptor proteins following the stoichiometry: a single gamma-delta TR heterodimer associates with one CD3D-CD3E heterodimer, one CD3G-CD3E heterodimer and one CD247 homodimer forming a stable octameric structure. Upon activation, gamma-delta TR complex associates with FCER1G to initiate intracellular signaling.

It localises to the cell membrane. Its function is as follows. Constant region of T cell receptor (TR) gamma chain that participates in the antigen recognition. Gamma-delta TRs recognize a variety of self and foreign non-peptide antigens frequently expressed at the epithelial boundaries between the host and external environment, including endogenous lipids presented by MH-like protein CD1D and phosphoantigens presented by butyrophilin-like molecule BTN3A1. Upon antigen recognition induces rapid, innate-like immune responses involved in pathogen clearance and tissue repair. Binding of gamma-delta TR complex to antigen triggers phosphorylation of immunoreceptor tyrosine-based activation motifs (ITAMs) in the CD3 chains by the LCK and FYN kinases, allowing the recruitment, phosphorylation, and activation of ZAP70 that facilitates phosphorylation of the scaffolding proteins LCP2 and LAT. This lead to the formation of a supramolecular signalosome that recruits the phospholipase PLCG1, resulting in calcium mobilization and ERK activation, ultimately leading to T cell expansion and differentiation into effector cells. Gamma-delta TRs are produced through somatic rearrangement of a limited repertoire of variable (V), diversity (D), and joining (J) genes. The potential diversity of gamma-delta TRs is conferred by the unique ability to rearrange (D) genes in tandem and to utilize all three reading frames. The combinatorial diversity is considerably increased by the sequence exonuclease trimming and random nucleotide (N) region additions which occur during the V-(D)-J rearrangements. The chain is T cell receptor gamma constant 1 from Homo sapiens (Human).